A 503-amino-acid chain; its full sequence is Cytochrome P450 3A25 (503 aa).

Cys-442 is a heme binding site.

Belongs to the cytochrome P450 family. Heme is required as a cofactor.

It localises to the endoplasmic reticulum membrane. The protein localises to the microsome membrane. It carries out the reaction an organic molecule + reduced [NADPH--hemoprotein reductase] + O2 = an alcohol + oxidized [NADPH--hemoprotein reductase] + H2O + H(+). Its function is as follows. Cytochromes P450 are a group of heme-thiolate monooxygenases. In liver microsomes, this enzyme is involved in an NADPH-dependent electron transport pathway. It oxidizes a variety of structurally unrelated compounds, including steroids, fatty acids, and xenobiotics. In Mus musculus (Mouse), this protein is Cytochrome P450 3A25 (Cyp3a25).